Reading from the N-terminus, the 1243-residue chain is Inositol hexakisphosphate and diphosphoinositol-pentakisphosphate kinase 2 (1243 aa).

Residue S38 is modified to Phosphoserine. 53–54 (KK) is a binding site for substrate. ATP is bound by residues R134, K187, H194, and R213. Substrate is bound at residue 213–214 (RK). The residue at position 223 (S223) is a Phosphoserine. ATP is bound by residues 237–240 (EEFM) and 246–248 (DVK). Substrate is bound by residues K248 and R262. ATP is bound by residues S264, D309, and 321–323 (DVN). 326–329 (SFVK) serves as a coordination point for substrate. The polyphosphoinositide-binding domain stretch occupies residues 371-442 (PTTSGTMMEL…VLDIARQLLM (72 aa)). 2 disordered regions span residues 898-941 (KGCE…RDEV) and 957-1016 (HIHR…SPVS). The segment covering 915–941 (ASRENEGRRPFKIDNDDEPHTSKRDEV) has biased composition (basic and acidic residues). The span at 958–969 (IHRKSPLPRSRK) shows a compositional bias: basic residues. Phosphoserine is present on residues S1006, S1016, S1074, S1091, S1165, S1172, and S1180. Residues 1185-1243 (TPAKILPTPPATLKSTKASSKPATSGPSSAVVPNTSSRKKNITSKTETHEHKKNTGKKK) are disordered. A compositionally biased stretch (low complexity) spans 1195–1209 (ATLKSTKASSKPATS). The segment covering 1210 to 1220 (GPSSAVVPNTS) has biased composition (polar residues). Phosphoserine is present on residues S1220 and S1221.

It belongs to the histidine acid phosphatase family. VIP1 subfamily.

The protein resides in the cytoplasm. The protein localises to the cytosol. It catalyses the reaction 1D-myo-inositol hexakisphosphate + ATP = 1-diphospho-1D-myo-inositol 2,3,4,5,6-pentakisphosphate + ADP. The catalysed reaction is 5-diphospho-1D-myo-inositol 1,2,3,4,6-pentakisphosphate + ATP + H(+) = 1,5-bis(diphospho)-1D-myo-inositol 2,3,4,6-tetrakisphosphate + ADP. Functionally, bifunctional inositol kinase that acts in concert with the IP6K kinases IP6K1, IP6K2 and IP6K3 to synthesize the diphosphate group-containing inositol pyrophosphates diphosphoinositol pentakisphosphate, PP-InsP5, and bis-diphosphoinositol tetrakisphosphate, (PP)2-InsP4. PP-InsP5 and (PP)2-InsP4, also respectively called InsP7 and InsP8, regulate a variety of cellular processes, including apoptosis, vesicle trafficking, cytoskeletal dynamics, exocytosis, insulin signaling and neutrophil activation. Phosphorylates inositol hexakisphosphate (InsP6) at position 1 to produce PP-InsP5 which is in turn phosphorylated by IP6Ks to produce (PP)2-InsP4. Alternatively, phosphorylates PP-InsP5 at position 1, produced by IP6Ks from InsP6, to produce (PP)2-InsP4. Required for normal hearing. The polypeptide is Inositol hexakisphosphate and diphosphoinositol-pentakisphosphate kinase 2 (Homo sapiens (Human)).